We begin with the raw amino-acid sequence, 460 residues long: Elongation factor 1-alpha 3 (460 aa).

Residues 6–243 enclose the tr-type G domain; sequence KTHINIVVIG…DCIIPPQRPT (238 aa). The G1 stretch occupies residues 15-22; that stretch reads GHVDSGKS. The tract at residues 71–75 is G2; it reads GITID. Residues 92-95 form a G3 region; the sequence is DAPG. Residues 154–157 are G4; it reads NKMD. Residues 195-197 are G5; the sequence is SGF. A 5-glutamyl glycerylphosphorylethanolamine mark is found at glutamate 302 and glutamate 375.

It belongs to the TRAFAC class translation factor GTPase superfamily. Classic translation factor GTPase family. EF-Tu/EF-1A subfamily.

It localises to the cytoplasm. Its function is as follows. This protein promotes the GTP-dependent binding of aminoacyl-tRNA to the A-site of ribosomes during protein biosynthesis. The polypeptide is Elongation factor 1-alpha 3 (eft-3) (Oscheius tipulae).